Consider the following 448-residue polypeptide: Squalene synthase ERG9 (448 aa).

The chain crosses the membrane as a helical span at residues Arg420–Leu440.

Belongs to the phytoene/squalene synthase family. Mg(2+) is required as a cofactor.

The protein localises to the endoplasmic reticulum membrane. It is found in the microsome. The catalysed reaction is 2 (2E,6E)-farnesyl diphosphate + NADPH + H(+) = squalene + 2 diphosphate + NADP(+). It carries out the reaction 2 (2E,6E)-farnesyl diphosphate + NADH + H(+) = squalene + 2 diphosphate + NAD(+). The protein operates within terpene metabolism; lanosterol biosynthesis; lanosterol from farnesyl diphosphate: step 1/3. Squalene synthase; part of the third module of ergosterol biosynthesis pathway that includes the late steps of the pathway. ERG9 produces squalene from 2 farnesyl pyrophosphate moieties. The third module or late pathway involves the ergosterol synthesis itself through consecutive reactions that mainly occur in the endoplasmic reticulum (ER) membrane. Firstly, the squalene synthase ERG9 catalyzes the condensation of 2 farnesyl pyrophosphate moieties to form squalene, which is the precursor of all steroids. Squalene synthase is crucial for balancing the incorporation of farnesyl diphosphate (FPP) into sterol and nonsterol isoprene synthesis. Secondly, the squalene epoxidase ERG1 catalyzes the stereospecific oxidation of squalene to (S)-2,3-epoxysqualene, which is considered to be a rate-limiting enzyme in steroid biosynthesis. Then, the lanosterol synthase ERG7 catalyzes the cyclization of (S)-2,3 oxidosqualene to lanosterol, a reaction that forms the sterol core. In the next steps, lanosterol is transformed to zymosterol through a complex process involving various demethylation, reduction and desaturation reactions. The lanosterol 14-alpha-demethylase ERG11 (also known as CYP51) catalyzes C14-demethylation of lanosterol to produce 4,4'-dimethyl cholesta-8,14,24-triene-3-beta-ol, which is critical for ergosterol biosynthesis. The C-14 reductase ERG24 reduces the C14=C15 double bond of 4,4-dimethyl-cholesta-8,14,24-trienol to produce 4,4-dimethyl-cholesta-8,24-dienol. 4,4-dimethyl-cholesta-8,24-dienol is substrate of the C-4 demethylation complex ERG25-ERG26-ERG27 in which ERG25 catalyzes the three-step monooxygenation required for the demethylation of 4,4-dimethyl and 4alpha-methylsterols, ERG26 catalyzes the oxidative decarboxylation that results in a reduction of the 3-beta-hydroxy group at the C-3 carbon to an oxo group, and ERG27 is responsible for the reduction of the keto group on the C-3. ERG28 has a role as a scaffold to help anchor ERG25, ERG26 and ERG27 to the endoplasmic reticulum and ERG29 regulates the activity of the iron-containing C4-methylsterol oxidase ERG25. Then, the sterol 24-C-methyltransferase ERG6 catalyzes the methyl transfer from S-adenosyl-methionine to the C-24 of zymosterol to form fecosterol. The C-8 sterol isomerase ERG2 catalyzes the reaction which results in unsaturation at C-7 in the B ring of sterols and thus converts fecosterol to episterol. The sterol-C5-desaturase ERG3 then catalyzes the introduction of a C-5 double bond in the B ring to produce 5-dehydroepisterol. The C-22 sterol desaturase ERG5 further converts 5-dehydroepisterol into ergosta-5,7,22,24(28)-tetraen-3beta-ol by forming the C-22(23) double bond in the sterol side chain. Finally, ergosta-5,7,22,24(28)-tetraen-3beta-ol is substrate of the C-24(28) sterol reductase ERG4 to produce ergosterol. This is Squalene synthase ERG9 from Candida albicans (Yeast).